The chain runs to 215 residues: MIQVIVLSGPIGAGKSSLTSILAEHLGTQAFYEGVDSNPVLPLYYKDMKRYTFLLNTYLLNHRLAQINQAIQEKNSVSDRSIYEDALFFKMNADSSVADPTEFKIYNDLLENMMEDTPGNPSKKPDLLIYIHVSLDTMLKRIKKRGRSFEQISTDPSLKDYYARLLKYYEPWYENYNASPKIMINGDKLDFVTNMNAQKEVLKEIDEKLREIGNL.

ATP is bound at residue 9–17; the sequence is GPIGAGKSS. 3 residues coordinate substrate: E33, Y45, and N56. D79 functions as the Proton acceptor in the catalytic mechanism. The substrate site is built by R80, D85, and E150.

It belongs to the DCK/DGK family. Heterodimer of a deoxyadenosine (DAK) and a deoxyguanosine kinase (DGK).

It catalyses the reaction 2'-deoxyadenosine + ATP = dAMP + ADP + H(+). DGK/DAK plays an essential role in generating the deoxyribonucleotide precursors, dGTP and dATP, for DNA metabolism. In Lactobacillus acidophilus (strain ATCC 700396 / NCK56 / N2 / NCFM), this protein is Deoxyadenosine kinase.